The primary structure comprises 63 residues: Large ribosomal subunit protein bL28 (63 aa).

It belongs to the bacterial ribosomal protein bL28 family.

In Alkaliphilus metalliredigens (strain QYMF), this protein is Large ribosomal subunit protein bL28.